A 667-amino-acid chain; its full sequence is tRNA uridine 5-carboxymethylaminomethyl modification enzyme MnmG (667 aa).

FAD is bound at residue 13 to 18 (GGGHAG). Residue 280-294 (GPRYCPSVEDKINRF) participates in NAD(+) binding.

It belongs to the MnmG family. Homodimer. Heterotetramer of two MnmE and two MnmG subunits. FAD is required as a cofactor.

The protein resides in the cytoplasm. In terms of biological role, NAD-binding protein involved in the addition of a carboxymethylaminomethyl (cmnm) group at the wobble position (U34) of certain tRNAs, forming tRNA-cmnm(5)s(2)U34. The polypeptide is tRNA uridine 5-carboxymethylaminomethyl modification enzyme MnmG (Polaromonas naphthalenivorans (strain CJ2)).